Consider the following 706-residue polypeptide: Elongation factor G (706 aa).

The 277-residue stretch at 12–288 folds into the tr-type G domain; sequence EKTRNIGIMA…GVTNYLPSPN (277 aa). Residues 21–28, 85–89, and 139–142 each bind GTP; these read AHIDAGKT, DTPGH, and NKMD. The segment at 288–309 is disordered; sequence NDVPAITGHHPQDKEEDITRHP. Basic and acidic residues predominate over residues 297–309; that stretch reads HPQDKEEDITRHP.

The protein belongs to the TRAFAC class translation factor GTPase superfamily. Classic translation factor GTPase family. EF-G/EF-2 subfamily.

The protein localises to the cytoplasm. Functionally, catalyzes the GTP-dependent ribosomal translocation step during translation elongation. During this step, the ribosome changes from the pre-translocational (PRE) to the post-translocational (POST) state as the newly formed A-site-bound peptidyl-tRNA and P-site-bound deacylated tRNA move to the P and E sites, respectively. Catalyzes the coordinated movement of the two tRNA molecules, the mRNA and conformational changes in the ribosome. In Salinibacter ruber (strain DSM 13855 / M31), this protein is Elongation factor G.